The following is a 167-amino-acid chain: Effector CFEM8 (167 aa).

An N-terminal signal peptide occupies residues 1 to 17 (MQFSIVVMAALASLASA). The 95-residue stretch at 18–112 (QSMDGIPTCA…TPAAAAPYPT (95 aa)) folds into the CFEM domain. 4 cysteine pairs are disulfide-bonded: cysteine 26/cysteine 68, cysteine 30/cysteine 63, cysteine 40/cysteine 47, and cysteine 49/cysteine 85. Aspartate 44 contacts heme. N-linked (GlcNAc...) asparagine glycosylation is found at asparagine 117 and asparagine 135. The GPI-anchor amidated glycine moiety is linked to residue glycine 143. The propeptide at 144–167 (SAPQNVAGGLAGIFGLVVAAAFAL) is removed in mature form.

It belongs to the RBT5 family.

Its subcellular location is the cell membrane. The protein resides in the secreted. It localises to the host nucleus. The protein localises to the host cell membrane. Its function is as follows. Appears to function during host infection, and may play a role in suppressing the host immune response. This chain is Effector CFEM8, found in Marssonina brunnea f. sp. multigermtubi (strain MB_m1) (Marssonina leaf spot fungus).